We begin with the raw amino-acid sequence, 253 residues long: MATHRLVMVRHGESSWNQENRFCGWFDAELSEKGAEEAKRGATAIKDAKIEFDICYTSVLKRAIRTLWTILDVTDQMWVPVVRTWRLNERHYGGLTGLNKAETAAKHGEEQVKIWRRSFDTPPPPMDEKHNYYASISKDRRYAGLKPEELPTCESLKDTIARALPFWNEEIAPKIKAGKRVLIAAHGNSLRGIVKHLEGMSDQAIMELNLPTGIPIVYELNQELKPTKPMRFLGDEETVRKAMEAVAAQGKAK.

At Thr3 the chain carries Phosphothreonine. Substrate is bound by residues 10-17 (RHGESSWN), 23-24 (CG), Arg62, 89-92 (ERHY), Lys100, and 116-117 (RR). His11 functions as the Tele-phosphohistidine intermediate in the catalytic mechanism. Ser14 and Ser15 each carry phosphoserine. Catalysis depends on Glu89, which acts as the Proton donor/acceptor. Ser118 bears the Phosphoserine mark. At Thr121 the chain carries Phosphothreonine. 2 positions are modified to phosphotyrosine: Tyr132 and Tyr133. Position 135 is a phosphoserine (Ser135). Thr152 carries the post-translational modification Phosphothreonine. 187–188 (GN) serves as a coordination point for substrate.

This sequence belongs to the phosphoglycerate mutase family. BPG-dependent PGAM subfamily. In terms of assembly, homodimer. Interacts with ENO1.

The catalysed reaction is (2R)-2-phosphoglycerate = (2R)-3-phosphoglycerate. It catalyses the reaction (2R)-3-phospho-glyceroyl phosphate = (2R)-2,3-bisphosphoglycerate + H(+). Functionally, interconversion of 3- and 2-phosphoglycerate with 2,3-bisphosphoglycerate as the primer of the reaction. Can also catalyze the reaction of EC 5.4.2.4 (synthase), but with a reduced activity. This chain is Phosphoglycerate mutase 2 (Pgam2), found in Rattus norvegicus (Rat).